The following is a 594-amino-acid chain: Probable translation initiation factor IF-2 (594 aa).

Positions 11–226 constitute a tr-type G domain; the sequence is LRTPIVCVMG…LIGLAQRFLE (216 aa). Positions 20-27 are G1; sequence GHVDHGKT. A GTP-binding site is contributed by 20-27; that stretch reads GHVDHGKT. The segment at 45-49 is G2; sequence AITQH. The interval 81-84 is G3; it reads DTPG. GTP is bound by residues 81 to 85 and 135 to 138; these read DTPGH and NKID. Residues 135-138 are G4; it reads NKID. Residues 203–205 form a G5 region; the sequence is SAR.

This sequence belongs to the TRAFAC class translation factor GTPase superfamily. Classic translation factor GTPase family. IF-2 subfamily.

Functionally, function in general translation initiation by promoting the binding of the formylmethionine-tRNA to ribosomes. Seems to function along with eIF-2. This chain is Probable translation initiation factor IF-2, found in Methanocella arvoryzae (strain DSM 22066 / NBRC 105507 / MRE50).